A 179-amino-acid chain; its full sequence is tRNA (cytidine(56)-2'-O)-methyltransferase (179 aa).

Residues Leu82, 112 to 116 (GAEKV), and 130 to 137 (VGNQPHSE) contribute to the S-adenosyl-L-methionine site.

It belongs to the aTrm56 family. Homodimer.

Its subcellular location is the cytoplasm. The catalysed reaction is cytidine(56) in tRNA + S-adenosyl-L-methionine = 2'-O-methylcytidine(56) in tRNA + S-adenosyl-L-homocysteine + H(+). Functionally, specifically catalyzes the AdoMet-dependent 2'-O-ribose methylation of cytidine at position 56 in tRNAs. The polypeptide is tRNA (cytidine(56)-2'-O)-methyltransferase (Methanococcus maripaludis (strain DSM 14266 / JCM 13030 / NBRC 101832 / S2 / LL)).